The chain runs to 794 residues: Zinc finger and BTB domain-containing protein 17 (794 aa).

The BTB domain occupies 1–104 (MDFPQHSQRV…VASFLQMQDI (104 aa)). Positions 116–285 (EPSSTTGESA…QNLRSGTYGD (170 aa)) are disordered. Residues 132-142 (GGDKRAKDEKA) show a composition bias toward basic and acidic residues. Residues 203 to 216 (SSMAAAEAEALSES) show a composition bias toward low complexity. The segment covering 243-252 (VKEEGMHLDN) has biased composition (basic and acidic residues). The segment covering 254-263 (EPPEENEESA) has biased composition (acidic residues). The segment at 260 to 299 (EESAGTDSGQELGMEGQNLRSGTYGDRTESKAYGSIIHKC) is interaction with MYC. 13 consecutive C2H2-type zinc fingers follow at residues 297 to 319 (HKCE…IRIH), 325 to 347 (FSCR…EKTH), 353 to 375 (YGCE…KKRH), 381 to 403 (YRCG…QLVH), 409 to 431 (YQCD…LETH), 437 to 459 (HKCP…LKIH), 465 to 487 (LKCR…LRIH), 493 to 515 (YVCT…VRIH), 519 to 543 (KPCQ…VRQH), 549 to 571 (YVCE…IRHH), 577 to 599 (HKCS…IIIH), 605 to 628 (YLCD…KTVH), and 708 to 730 (YACD…VRIH). A Glycyl lysine isopeptide (Lys-Gly) (interchain with G-Cter in ubiquitin) cross-link involves residue Lys-388. Residue Lys-472 forms a Glycyl lysine isopeptide (Lys-Gly) (interchain with G-Cter in ubiquitin) linkage. The segment at 628–709 (HQGKAGIKIL…EDPNTHILYA (82 aa)) is interaction with MYC. The interval 628-794 (HQGKAGIKIL…TAPDCLPPAE (167 aa)) is interaction with HCFC1. Residues 769-794 (PRDGTEGQPTLAESPPTAPDCLPPAE) form a disordered region. Over residues 784 to 794 (PTAPDCLPPAE) the composition is skewed to pro residues.

It belongs to the krueppel C2H2-type zinc-finger protein family. In terms of assembly, homooligomerizes (via the BTB/POZ domain), multimerization is required for DNA binding. Binds to the C-terminal helix-loop-helix motif of MYC which inhibits ZBTB17 transactivation and growth arrest activities and renders it insoluble in the nucleus. Also interacts with HCFC1, MAGEA4 and TMPRSS11A. Interacts (via the C-terminal zinc fingers) with GFI1; the interaction results in the recruitment of MYC to the CDKN1A/p21 and CDKN1B promoters and repression of transcription. Interacts with TRAF2, interfering with the binding of UBC13 to TRAF2, and inhibiting TRAF2 E3 ligase activity. Interacts with BCL6; the interaction inhibits ZBTB17 transactivation activity on target genes involved in cell cycle arrest. Interacts with ZBTB49; this interaction blocks ZBTB17-mediated repression of RB1. Undergoes 'Lys-48'-linked polyubiquitination at Lys-388 and Lys-472 and subsequent proteasomal degradation in a TRAF2-dependent manner and upon TNFA stimulation. As to expression, found in all the embryonic and adult tissues examined.

It localises to the nucleus. Transcription factor that can function as an activator or repressor depending on its binding partners, and by targeting negative regulators of cell cycle progression. Has been shown to bind to the promoters of adenovirus major late protein and cyclin D1 and activate transcription. Required for early embryonic development during gastrulation. Plays a critical role in early lymphocyte development, where it is essential to prevent apoptosis in lymphoid precursors, allowing them to survive in response to IL7 and undergo proper lineage commitment. Represses RB1 transcription; this repression can be blocked by interaction with ZBTB49. This is Zinc finger and BTB domain-containing protein 17 (Zbtb17) from Mus musculus (Mouse).